Here is a 469-residue protein sequence, read N- to C-terminus: Probable monogalactosyldiacylglycerol synthase 2, chloroplastic (469 aa).

The transit peptide at 1–42 (MVISVATPRRSIRDAVLGGVLGAGGRQLYQPLRCAFYDGAAG) directs the protein to the chloroplast.

It belongs to the glycosyltransferase 28 family.

Its subcellular location is the plastid. The protein resides in the chloroplast membrane. It catalyses the reaction a 1,2-diacyl-sn-glycerol + UDP-alpha-D-galactose = a 1,2-diacyl-3-O-(beta-D-galactosyl)-sn-glycerol + UDP + H(+). Functionally, involved in the synthesis of the major structural component of photosynthetic membranes. The sequence is that of Probable monogalactosyldiacylglycerol synthase 2, chloroplastic (MGD2) from Oryza sativa subsp. japonica (Rice).